We begin with the raw amino-acid sequence, 199 residues long: Thioredoxin reductase-like selenoprotein T (199 aa).

An N-terminal signal peptide occupies residues 1-24 (MRAAGLGLGIGLLLLAALAGPGGS). The segment at residues 50-53 (CVSU) is a cross-link (cysteinyl-selenocysteine (Cys-Sec)). U53 is a non-standard amino acid (selenocysteine). Residues 95–115 (VFKLVLIGLIIVGKDPFAFFG) traverse the membrane as a helical segment.

The protein belongs to the SelWTH family. Selenoprotein T subfamily. In terms of processing, may contain a selenide-sulfide bond between Cys-50 and Sec-53. This bond is speculated to serve as redox-active pair.

It localises to the endoplasmic reticulum membrane. It carries out the reaction [thioredoxin]-dithiol + NADP(+) = [thioredoxin]-disulfide + NADPH + H(+). Selenoprotein with thioredoxin reductase-like oxidoreductase activity. The protein is Thioredoxin reductase-like selenoprotein T of Gallus gallus (Chicken).